The following is a 253-amino-acid chain: MAHLLIVNADDFGLSRGQNYGIVECHRHGIVTSTTALVNAEGIEHAAQLCKELPHLGVGLHFTLTMGQPLSPIPSLTRNGVLGKWLWQMAEQEQLPLDEIRVELNAQYQRFVELFGCPPDHIDSHHHVHMFKQIFPIVAEFAQQKALPIRVDRLLAQKENLNTQGVISSDGFDSQFYGDEISQALFLKTLDDAKARGEQSLEVMTHPAFIDNPLRVSGYCFQRLTELEVLTQSSLKQAIAERGYQLGTYQDLI.

Residues H61 and H125 each coordinate Mg(2+).

The protein belongs to the YdjC deacetylase family. ChbG subfamily. Homodimer. The cofactor is Mg(2+).

It localises to the cytoplasm. It catalyses the reaction N,N'-diacetylchitobiose + H2O = N-acetyl-beta-D-glucosaminyl-(1-&gt;4)-D-glucosamine + acetate. It carries out the reaction diacetylchitobiose-6'-phosphate + H2O = N'-monoacetylchitobiose-6'-phosphate + acetate. The protein operates within glycan degradation; chitin degradation. Involved in the degradation of chitin. ChbG is essential for growth on the acetylated chitooligosaccharides chitobiose and chitotriose but is dispensable for growth on cellobiose and chitosan dimer, the deacetylated form of chitobiose. Deacetylation of chitobiose-6-P and chitotriose-6-P is necessary for both the activation of the chb promoter by the regulatory protein ChbR and the hydrolysis of phosphorylated beta-glucosides by the phospho-beta-glucosidase ChbF. Catalyzes the removal of only one acetyl group from chitobiose-6-P to yield monoacetylchitobiose-6-P, the inducer of ChbR and the substrate of ChbF. This chain is Chitooligosaccharide deacetylase, found in Proteus mirabilis (strain HI4320).